Consider the following 455-residue polypeptide: Glutamyl-tRNA(Gln) amidotransferase subunit A (455 aa).

Catalysis depends on charge relay system residues lysine 74 and serine 149. Serine 173 functions as the Acyl-ester intermediate in the catalytic mechanism.

It belongs to the amidase family. GatA subfamily. Heterotrimer of A, B and C subunits.

It catalyses the reaction L-glutamyl-tRNA(Gln) + L-glutamine + ATP + H2O = L-glutaminyl-tRNA(Gln) + L-glutamate + ADP + phosphate + H(+). Functionally, allows the formation of correctly charged Gln-tRNA(Gln) through the transamidation of misacylated Glu-tRNA(Gln) in organisms which lack glutaminyl-tRNA synthetase. The reaction takes place in the presence of glutamine and ATP through an activated gamma-phospho-Glu-tRNA(Gln). The chain is Glutamyl-tRNA(Gln) amidotransferase subunit A from Methanosphaera stadtmanae (strain ATCC 43021 / DSM 3091 / JCM 11832 / MCB-3).